The following is a 104-amino-acid chain: Phosphoribosyl-ATP pyrophosphatase (104 aa).

Belongs to the PRA-PH family.

The protein resides in the cytoplasm. It carries out the reaction 1-(5-phospho-beta-D-ribosyl)-ATP + H2O = 1-(5-phospho-beta-D-ribosyl)-5'-AMP + diphosphate + H(+). Its pathway is amino-acid biosynthesis; L-histidine biosynthesis; L-histidine from 5-phospho-alpha-D-ribose 1-diphosphate: step 2/9. The sequence is that of Phosphoribosyl-ATP pyrophosphatase from Methanoregula boonei (strain DSM 21154 / JCM 14090 / 6A8).